A 429-amino-acid polypeptide reads, in one-letter code: Probable alcohol acetyltransferase orf1 (429 aa).

This sequence belongs to the alcohol acetyltransferase FCK4 family.

It functions in the pathway secondary metabolite biosynthesis. Probable alcohol acetyltransferase; part of the gene cluster that mediates the biosynthesis of the glycolipid biosurfactant ustilagic acid (UA). UA is a secreted cellobiose glycolipid that is toxic for many microorganisms and confers biocontrol activity to U.maydis. UA consists of 15,16-dihydroxypalmitic or 2,15,16-trihydroxypalmitic acid, which is O-glycosidically linked to cellobiose at its terminal hydroxyl group. In addition, the cellobiose moiety is acetylated and acylated with a short-chain hydroxy fatty acid. UA biosynthesis starts with omega-hydroxylation of palmitic acid catalyzed by the cytochrome P450 monooxygenase cyp1. Terminal hydroxylation of palmitic acid precedes subterminal hydroxylation catalyzed by the cytochrome P450 monooxygenase cyp2. Sequential glucosylation of the hydroxy fatty acid is probably catalyzed by the glycosyltransferase ugt1. The cellobiose lipid is further decorated by acetylation of the proximal glucose residue and by acylation with a short-chain beta-hydroxy fatty acid at the distal glucose residue. The acyltransferase uat1 may be a good candidate for catalyzing either acetylation or acylation of the cellobiose lipid. The fatty acid synthase fas2 may be involved in synthesis of the carbon backbone of the short-chain beta-hydroxy fatty acid esterified to the cellobiose disaccharide. The secreted UA consists of a mixture of both alpha-hydroxylated and non-hydroxylated glycolipids; therefore, alpha-hydroxylation of the long-chain fatty, catalyzed by the fatty acid hydroxylase ahd1, occurs late in UA biosynthesis and may be the last step before secretion. The sequence is that of Probable alcohol acetyltransferase orf1 from Mycosarcoma maydis (Corn smut fungus).